Here is a 107-residue protein sequence, read N- to C-terminus: Universal stress protein B homolog (107 aa).

2 consecutive transmembrane segments (helical) span residues 6–26 and 86–106; these read IILF…LTAL and VREL…AAFL.

The protein belongs to the universal stress protein B family.

The protein resides in the cell inner membrane. The sequence is that of Universal stress protein B homolog from Vibrio vulnificus (strain CMCP6).